Consider the following 333-residue polypeptide: MAQDRECLCSAGFQRGDYTQGNTDRSTAAANSRPPAGQRGAEEPSSGGAGTPPPAAVLPTMPDEATENAGSTSARVSSFFIEDLLGTEGGGGTRRAAAGGGGGRGAPRCGPHSPLRLGASGCPLRDAAVGWYRRAFLGCASPDTSDRDSPELPEDTERAGGGGRAAARGPAGGRQSSGGREEEEERGEEAGEAEQRAAGRKKKTRTVFSRSQVFQLESTFDVKRYLSSSERAGLAASLHLTETQVKIWFQNRRNKWKRQLAADLEAANLSHAAQRIVRVPILYHENSPASALGFGLPHMSPPLVGFSGGVSYPLGTFPAASLPFLRSQMTGLV.

3 disordered regions span residues 1-74 (MAQD…STSA), 86-109 (GTEG…APRC), and 139-204 (CASP…KKKT). Residues 17-30 (DYTQGNTDRSTAAA) are compositionally biased toward polar residues. Positions 87-105 (TEGGGGTRRAAAGGGGGRG) are enriched in gly residues. Positions 144-158 (TSDRDSPELPEDTER) are enriched in basic and acidic residues. Gly residues predominate over residues 159–176 (AGGGGRAAARGPAGGRQS). Residues 181–192 (EEEEERGEEAGE) show a composition bias toward acidic residues. The segment at residues 201–260 (KKKTRTVFSRSQVFQLESTFDVKRYLSSSERAGLAASLHLTETQVKIWFQNRRNKWKRQL) is a DNA-binding region (homeobox). The HMX family specific domain 1 motif lies at 261-271 (AADLEAANLSH).

Belongs to the HMX homeobox family.

The protein resides in the nucleus. DNA-binding protein that binds to the 5'-CAAG-3' core sequence. May function as a transcriptional repressor. Seems to act as a transcriptional antagonist of NKX2-5. May play an important role in the development of craniofacial structures such as the eye and ear. In Gallus gallus (Chicken), this protein is Homeobox protein HMX1 (HMX1).